The chain runs to 312 residues: Very long chain fatty acid elongase 4 (312 aa).

The N-linked (GlcNAc...) asparagine glycan is linked to Asn-20. 7 helical membrane passes run 42–62 (LMQS…FVWL), 78–98 (VLII…RELF), 127–147 (ALWW…FFIL), 165–185 (MFTL…FFGA), 188–208 (NSFI…GPWI), 217–237 (YLTM…ALSL), and 246–266 (WMHW…LNFY). Residues 273–292 (PKQSKTGKTATNGISSNGVN) show a composition bias toward polar residues. A disordered region spans residues 273 to 312 (PKQSKTGKTATNGISSNGVNKSEKALENGKPQKNGKPKGE). The N-linked (GlcNAc...) asparagine glycan is linked to Asn-292. The Di-lysine motif signature appears at 308 to 312 (KPKGE).

Belongs to the ELO family. ELOVL4 subfamily. In terms of assembly, oligomer. In terms of processing, N-glycosylated. As to expression, expressed in the retina, exclusively in photoreceptor cells and in the brain, skin, testis and lens.

It localises to the endoplasmic reticulum membrane. It catalyses the reaction a very-long-chain acyl-CoA + malonyl-CoA + H(+) = a very-long-chain 3-oxoacyl-CoA + CO2 + CoA. The catalysed reaction is hexacosanoyl-CoA + malonyl-CoA + H(+) = 3-oxooctacosanyol-CoA + CO2 + CoA. It carries out the reaction octacosanoyl-CoA + malonyl-CoA + H(+) = 3-oxo-triacontanoyl-CoA + CO2 + CoA. The enzyme catalyses triacontanoyl-CoA + malonyl-CoA + H(+) = 3-oxo-dotriacontanoyl-CoA + CO2 + CoA. It catalyses the reaction (19Z,22Z,25Z,28Z,31Z)-tetratriacontapentaenoyl-CoA + malonyl-CoA + H(+) = 3-oxo-(21Z,24Z,27Z,30Z,33Z)-hexatriacontapentaenoyl-CoA + CO2 + CoA. The catalysed reaction is (4Z,7Z,10Z,13Z,16Z,19Z)-docosahexaenoyl-CoA + malonyl-CoA + H(+) = 3-oxo-(6Z,9Z,12Z,15Z,18Z,21Z)-tetracosahexaenoyl-CoA + CO2 + CoA. It carries out the reaction (7Z,10Z,13Z,16Z)-docosatetraenoyl-CoA + malonyl-CoA + H(+) = (9Z,12Z,15Z,18Z)-3-oxotetracosatetraenoyl-CoA + CO2 + CoA. The enzyme catalyses (11Z,14Z,17Z,20Z,23Z)-hexacosapentaenoyl-CoA + malonyl-CoA + H(+) = 3-oxo-(13Z,16Z,19Z,22Z,25Z)-octacosapentaenoyl-CoA + CO2 + CoA. It catalyses the reaction (13Z,16Z,19Z,22Z,25Z)-octacosapentaenoyl-CoA + malonyl-CoA + H(+) = 3-oxo-(15Z,18Z,21Z,24Z,27Z)-triacontapentaenoyl-CoA + CO2 + CoA. The catalysed reaction is (15Z,18Z,21Z,24Z,27Z)-triacontapentaenoyl-CoA + malonyl-CoA + H(+) = 3-oxo-(17Z,20Z,23Z,26Z,29Z)-dotriacontapentaenoyl-CoA + CO2 + CoA. It carries out the reaction (17Z,20Z,23Z,26Z,29Z)-dotriacontapentaenoyl-CoA + malonyl-CoA + H(+) = 3-oxo-(19Z,22Z,25Z,28Z,31Z)-tetratriacontapentaenoyl-CoA + CO2 + CoA. The enzyme catalyses (21Z,24Z,27Z,30Z,33Z)-hexatriacontapentaenoyl-CoA + malonyl-CoA + H(+) = 3-oxo-(23Z,26Z,29Z,32Z,35Z)-octatriacontapentaenoyl-CoA + CO2 + CoA. It catalyses the reaction (11Z,14Z,17Z,20Z)-hexacosatetraenoyl-CoA + malonyl-CoA + H(+) = (13Z,16Z,19Z,22Z)-3-oxooctacosatetraenoyl-CoA + CO2 + CoA. The catalysed reaction is (13Z,16Z,19Z,22Z)-octacosatetraenoyl-CoA + malonyl-CoA + H(+) = 3-oxo-(15Z,18Z,21Z,24Z)-triacontatetraenoyl-CoA + CO2 + CoA. It carries out the reaction (15Z,18Z,21Z,24Z)-triacontatetraenoyl-CoA + malonyl-CoA + H(+) = 3-oxo-(17Z,20Z,23Z,26Z)-dotriacontatetraenoyl-CoA + CO2 + CoA. The enzyme catalyses (17Z,20Z,23Z,26Z)-dotriacontatetraenoyl-CoA + malonyl-CoA + H(+) = 3-oxo-(19Z,22Z,25Z,28Z)-tetratriacontatetraenoyl-CoA + CO2 + CoA. It catalyses the reaction (19Z,22Z,25Z,28Z)-tetratriacontatetraenoyl-CoA + malonyl-CoA + H(+) = 3-oxo-(21Z,24Z,27Z,30Z)-hexatriacontatetraenoyl-CoA + CO2 + CoA. The catalysed reaction is (21Z,24Z,27Z,30Z)-hexatriacontatetraenoyl-CoA + malonyl-CoA + H(+) = 3-oxo-(23Z,26Z,29Z,32Z)-octatriacontatetraenoyl-CoA + CO2 + CoA. It carries out the reaction (6Z,9Z,12Z,15Z,18Z,21Z)-tetracosahexaenoyl-CoA + malonyl-CoA + H(+) = 3-oxo-(8Z,11Z,14Z,17Z,20Z,23Z)-hexacosahexaenoyl-CoA + CO2 + CoA. The enzyme catalyses (8Z,11Z,14Z,17Z,20Z,23Z)-hexacosahexaenoyl-CoA + malonyl-CoA + H(+) = 3-oxo-(10Z,13Z,16Z,19Z,22Z,25Z)-octacosahexaenoyl-CoA + CO2 + CoA. It catalyses the reaction (10Z,13Z,16Z,19Z,22Z,25Z)-octacosahexaenoyl-CoA + malonyl-CoA + H(+) = 3-oxo-(12Z,15Z,18Z,21Z,24Z,27Z)-triacontahexaenoyl-CoA + CO2 + CoA. The catalysed reaction is (12Z,15Z,18Z,21Z,24Z,27Z)-triacontahexaenoyl-CoA + malonyl-CoA + H(+) = 3-oxo-(14Z,17Z,20Z,23Z,26Z,29Z)-dotriacontahexaenoyl-CoA + CO2 + CoA. It carries out the reaction (14Z,17Z,20Z,23Z,26Z,29Z)-dotriacontahexaenoyl-CoA + malonyl-CoA + H(+) = 3-oxo-(16Z,19Z,22Z,25Z,28Z,31Z)-tetratriacontahexaenoyl-CoA + CO2 + CoA. The enzyme catalyses (16Z,19Z,22Z,25Z,28Z,31Z)-tetratriacontahexaenoyl-CoA + malonyl-CoA + H(+) = 3-oxo-(18Z,21Z,24Z,27Z,30Z,33Z)-hexatriacontahexaenoyl-CoA + CO2 + CoA. It catalyses the reaction (9Z,12Z,15Z,18Z,21Z)-tetracosapentaenoyl-CoA + malonyl-CoA + H(+) = 3-oxo-(11Z,14Z,17Z,20Z,23Z)-hexacosapentaenoyl-CoA + CO2 + CoA. The protein operates within lipid metabolism; fatty acid biosynthesis. In terms of biological role, catalyzes the first and rate-limiting reaction of the four reactions that constitute the long-chain fatty acids elongation cycle. This endoplasmic reticulum-bound enzymatic process allows the addition of 2 carbons to the chain of long- and very long-chain fatty acids (VLCFAs) per cycle. Condensing enzyme that catalyzes the synthesis of very long chain saturated (VLC-SFA) and polyunsaturated (PUFA) fatty acids that are involved in multiple biological processes as precursors of membrane lipids and lipid mediators. May play a critical role in early brain and skin development. The chain is Very long chain fatty acid elongase 4 from Mus musculus (Mouse).